Reading from the N-terminus, the 361-residue chain is D-alanine--D-alanine ligase (361 aa).

Positions 144 to 350 constitute an ATP-grasp domain; that stretch reads KLCVSEAGIA…FPELCDRLLQ (207 aa). 177 to 232 lines the ATP pocket; the sequence is PETLIYPVFVKPAHLGSSVGISKVSVQGELPEALAHACNLDTKVLIEQAMHGKEIE. Mg(2+) is bound by residues D303, E317, and N319.

Belongs to the D-alanine--D-alanine ligase family. The cofactor is Mg(2+). Requires Mn(2+) as cofactor.

Its subcellular location is the cytoplasm. It catalyses the reaction 2 D-alanine + ATP = D-alanyl-D-alanine + ADP + phosphate + H(+). Its pathway is cell wall biogenesis; peptidoglycan biosynthesis. Cell wall formation. The chain is D-alanine--D-alanine ligase from Chlorobium phaeovibrioides (strain DSM 265 / 1930) (Prosthecochloris vibrioformis (strain DSM 265)).